The sequence spans 867 residues: GRB2-associated and regulator of MAPK protein 1 (867 aa).

Residues 12 to 322 (NNITWSTTTL…GLLQGESWFE (311 aa)) form a CABIT region. Y464 is subject to Phosphotyrosine. Disordered regions lie at residues 511-530 (SADVNLPPPPVPPKSEAVKE), 536-594 (DAPP…QIES), and 735-758 (PPRTPKCTDAKKDAEAATTDTADA). Polar residues-rich tracts occupy residues 544–554 (SSKQAGSSSAT) and 569–581 (SPSPTLSYYSSGL). Residues 740–749 (KCTDAKKDAE) show a composition bias toward basic and acidic residues. Residues 802–867 (ISIEEISKSL…QFINGWRPKM (66 aa)) enclose the SAM domain.

It belongs to the GAREM family.

Its function is as follows. Adapter protein that may provide a link between cell surface epidermal growth factor receptor and the MAPK/ERK signaling pathway. May promote cell proliferation. The sequence is that of GRB2-associated and regulator of MAPK protein 1 (garem1) from Danio rerio (Zebrafish).